A 127-amino-acid chain; its full sequence is Fluoride-specific ion channel FluC (127 aa).

Helical transmembrane passes span 4–24, 38–58, 71–91, and 104–124; these read FSIL…RYLV, YGTL…IAAF, VIGL…MDNV, and LNIL…FQLL. Na(+) is bound by residues Gly78 and Thr81.

It belongs to the fluoride channel Fluc/FEX (TC 1.A.43) family.

The protein localises to the cell inner membrane. It carries out the reaction fluoride(in) = fluoride(out). Na(+) is not transported, but it plays an essential structural role and its presence is essential for fluoride channel function. Functionally, fluoride-specific ion channel. Important for reducing fluoride concentration in the cell, thus reducing its toxicity. The chain is Fluoride-specific ion channel FluC from Vibrio parahaemolyticus serotype O3:K6 (strain RIMD 2210633).